The following is a 172-amino-acid chain: Ribosome maturation factor RimM (172 aa).

The PRC barrel domain occupies 96 to 168 (DGEFYYHEII…RIDVTVLEGL (73 aa)).

This sequence belongs to the RimM family. In terms of assembly, binds ribosomal protein uS19.

Its subcellular location is the cytoplasm. Its function is as follows. An accessory protein needed during the final step in the assembly of 30S ribosomal subunit, possibly for assembly of the head region. Essential for efficient processing of 16S rRNA. May be needed both before and after RbfA during the maturation of 16S rRNA. It has affinity for free ribosomal 30S subunits but not for 70S ribosomes. This is Ribosome maturation factor RimM from Streptococcus mutans serotype c (strain ATCC 700610 / UA159).